The chain runs to 490 residues: Betaine aldehyde dehydrogenase (490 aa).

Ile-27 and Asp-93 together coordinate K(+). 150–152 (GAW) serves as a coordination point for NAD(+). Lys-162 acts as the Charge relay system in catalysis. Residue 176 to 179 (KPSE) coordinates NAD(+). Position 180 (Val-180) interacts with K(+). 230-233 (GTDT) contacts NAD(+). Residue Leu-246 participates in K(+) binding. Glu-252 serves as the catalytic Proton acceptor. Gly-254, Cys-286, and Glu-387 together coordinate NAD(+). Cys-286 (nucleophile) is an active-site residue. Cysteine sulfenic acid (-SOH) is present on Cys-286. Positions 457 and 460 each coordinate K(+). The active-site Charge relay system is Glu-464.

It belongs to the aldehyde dehydrogenase family. As to quaternary structure, dimer of dimers. Requires K(+) as cofactor.

It catalyses the reaction betaine aldehyde + NAD(+) + H2O = glycine betaine + NADH + 2 H(+). It participates in amine and polyamine biosynthesis; betaine biosynthesis via choline pathway; betaine from betaine aldehyde: step 1/1. Its function is as follows. Involved in the biosynthesis of the osmoprotectant glycine betaine. Catalyzes the irreversible oxidation of betaine aldehyde to the corresponding acid. This is Betaine aldehyde dehydrogenase from Pseudomonas fluorescens (strain SBW25).